The primary structure comprises 320 residues: MARNKIALIGSGMIGGTLAHLAGLKELGDVVLFDIAEGTPQGKGLDIAESSPVDGFDAKFTGANDYAAIEGADVVIVTAGVPRKPGMSRDDLLGINLKVMEQVGAGIKKYAPEAFVICITNPLDAMVWALQKFSGLPAHKVVGMAGVLDSARFRYFLSEEFNVSVEDVTAFVLGGHGDSMVPLARYSTVAGIPLPDLVKMGWTSRDKLDKIIQRTRDGGAEIVGLLKTGSAFYAPAASAIQVAESYLKDKKRVLPVAAQLSGQYGVKDMYVGVPTVIGANGVERIIEIDLDKDEKAQFDKSVASVAGLCEACIGIAPSLK.

Residues 10 to 15 (GSGMIG) and Asp-34 each bind NAD(+). Arg-83 and Arg-89 together coordinate substrate. NAD(+) is bound by residues Asn-96 and 119-121 (ITN). Substrate-binding residues include Asn-121 and Arg-152. Catalysis depends on His-176, which acts as the Proton acceptor.

It belongs to the LDH/MDH superfamily. MDH type 3 family.

It catalyses the reaction (S)-malate + NAD(+) = oxaloacetate + NADH + H(+). Functionally, catalyzes the reversible oxidation of malate to oxaloacetate. This is Malate dehydrogenase from Brucella canis (strain ATCC 23365 / NCTC 10854 / RM-666).